A 480-amino-acid polypeptide reads, in one-letter code: G-rich sequence factor 1 (480 aa).

The N-terminal 117 residues, Met1–Tyr117, are a transit peptide targeting the mitochondrion. 2 consecutive RRM domains span residues Lys122–Val246 and Gly250–Arg326. Ser244 carries the post-translational modification Phosphoserine. At Ser335 the chain carries Phosphoserine. The RRM 3 domain occupies His401–Lys480.

As to quaternary structure, monomer. Found in a complex with DDX28, DHX30, FASTKD2 and FASTKD5. Interacts with the mitochondrial RNase P complex subunit TRMT10C/MRPP1. Interacts with the 2 components of the mitochondrial degradosome complex, PNPT1 and SUPV3L1, in an RNA-dependent manner.

It is found in the mitochondrion matrix. The protein localises to the cytoplasm. In terms of biological role, regulator of post-transcriptional mitochondrial gene expression, required for assembly of the mitochondrial ribosome and for recruitment of mRNA and lncRNA. Binds RNAs containing the 14 base G-rich element. Preferentially binds RNAs transcribed from three contiguous genes on the light strand of mtDNA, the ND6 mRNA, and the long non-coding RNAs for MT-CYB and MT-ND5, each of which contains multiple consensus binding sequences. Involved in the degradosome-mediated decay of non-coding mitochondrial transcripts (MT-ncRNA) and tRNA-like molecules. Acts by unwinding G-quadruplex RNA structures in MT-ncRNA, thus facilitating their degradation by the degradosome. G-quadruplexes (G4) are non-canonical 4 stranded structures formed by transcripts from the light strand of mtDNA. The polypeptide is G-rich sequence factor 1 (GRSF1) (Homo sapiens (Human)).